The chain runs to 188 residues: Deoxyuridine 5'-triphosphate nucleotidohydrolase (188 aa).

Residues 1 to 34 (MGEMTSGVDGHGSTKRTTSEAQKMDFNTDRGSAI) are disordered.

Belongs to the dUTPase family. It depends on Mg(2+) as a cofactor.

The enzyme catalyses dUTP + H2O = dUMP + diphosphate + H(+). Its function is as follows. This enzyme is involved in nucleotide metabolism: it produces dUMP, the immediate precursor of thymidine nucleotides and it decreases the intracellular concentration of dUTP so that uracil cannot be incorporated into DNA. The chain is Deoxyuridine 5'-triphosphate nucleotidohydrolase (49) from Ictaluridae (bullhead catfishes).